The chain runs to 572 residues: Solute carrier family 22 member 16 (572 aa).

The chain crosses the membrane as a helical span at residues 21-41; sequence IFLYFICAFQNISCGIHYLAS. Residue N57 is glycosylated (N-linked (GlcNAc...) asparagine). Transmembrane regions (helical) follow at residues 156 to 176, 183 to 203, 208 to 228, 244 to 264, and 268 to 288; these read LIQP…GYLS, LVLW…AFTF, FIVA…VVFV, IHLH…GYFV, and WIYQ…CWML. An N-linked (GlcNAc...) asparagine glycan is attached at N315. 6 consecutive transmembrane segments (helical) span residues 359 to 379, 389 to 409, 416 to 436, 441 to 461, 476 to 496, and 503 to 523; these read TLIL…FSLN, LNLF…CLGM, NILI…MVIP, VWLV…FGLI, LAVG…PLCI, and IFMP…LTFL. An N-linked (GlcNAc...) asparagine glycan is attached at N559.

This sequence belongs to the major facilitator (TC 2.A.1) superfamily. Organic cation transporter (TC 2.A.1.19) family.

The protein localises to the cell membrane. The catalysed reaction is (R)-carnitine(in) = (R)-carnitine(out). The enzyme catalyses spermidine(in) = spermidine(out). Functionally, facilitative organic cation transporter that mediates the transport of carnitine as well as the polyamine spermidine. Mediates the partially Na(+)-dependent bidirectional transport of carnitine. May mediate L-carnitine secretion from testis epididymal epithelium into the lumen which is involved in the maturation of spermatozoa. The sequence is that of Solute carrier family 22 member 16 (SLC22A16) from Bos taurus (Bovine).